Reading from the N-terminus, the 353-residue chain is Mitochondrial distribution and morphology protein 10 (353 aa).

Belongs to the MDM10 family. Component of the ER-mitochondria encounter structure (ERMES) or MDM complex, composed of MMM1, MDM10, MDM12 and MDM34. Associates with the mitochondrial outer membrane sorting assembly machinery SAM(core) complex.

The protein localises to the mitochondrion outer membrane. Component of the ERMES/MDM complex, which serves as a molecular tether to connect the endoplasmic reticulum and mitochondria. Components of this complex are involved in the control of mitochondrial shape and protein biogenesis and may function in phospholipid exchange. MDM10 is involved in the late assembly steps of the general translocase of the mitochondrial outer membrane (TOM complex). Functions in the TOM40-specific route of the assembly of outer membrane beta-barrel proteins, including the association of TOM40 with the receptor TOM22 and small TOM proteins. Can associate with the SAM(core) complex as well as the MDM12-MMM1 complex, both involved in late steps of the major beta-barrel assembly pathway, that is responsible for biogenesis of all outer membrane beta-barrel proteins. May act as a switch that shuttles between both complexes and channels precursor proteins into the TOM40-specific pathway. Plays a role in mitochondrial morphology and in the inheritance of mitochondria. This is Mitochondrial distribution and morphology protein 10 from Yarrowia lipolytica (strain CLIB 122 / E 150) (Yeast).